The following is a 209-amino-acid chain: FMN-dependent NADH:quinone oxidoreductase 2 (209 aa).

FMN is bound by residues serine 9, 15-17, and 97-100; these read SVS and MWNF.

This sequence belongs to the azoreductase type 1 family. As to quaternary structure, homodimer. FMN serves as cofactor.

It carries out the reaction 2 a quinone + NADH + H(+) = 2 a 1,4-benzosemiquinone + NAD(+). It catalyses the reaction N,N-dimethyl-1,4-phenylenediamine + anthranilate + 2 NAD(+) = 2-(4-dimethylaminophenyl)diazenylbenzoate + 2 NADH + 2 H(+). Its function is as follows. Quinone reductase that provides resistance to thiol-specific stress caused by electrophilic quinones. Functionally, also exhibits azoreductase activity. Catalyzes the reductive cleavage of the azo bond in aromatic azo compounds to the corresponding amines. The polypeptide is FMN-dependent NADH:quinone oxidoreductase 2 (Pseudomonas syringae pv. tomato (strain ATCC BAA-871 / DC3000)).